We begin with the raw amino-acid sequence, 135 residues long: Ribosome-binding factor A (135 aa).

It belongs to the RbfA family. Monomer. Binds 30S ribosomal subunits, but not 50S ribosomal subunits or 70S ribosomes.

Its subcellular location is the cytoplasm. Its function is as follows. One of several proteins that assist in the late maturation steps of the functional core of the 30S ribosomal subunit. Associates with free 30S ribosomal subunits (but not with 30S subunits that are part of 70S ribosomes or polysomes). Required for efficient processing of 16S rRNA. May interact with the 5'-terminal helix region of 16S rRNA. In Aliivibrio salmonicida (strain LFI1238) (Vibrio salmonicida (strain LFI1238)), this protein is Ribosome-binding factor A.